The sequence spans 888 residues: C2H2 zinc finger transcription factor sltA (888 aa).

3 disordered regions span residues 1–78, 132–176, and 388–407; these read MSTS…QRSP, IDSQ…SSEN, and RSSM…ASAP. Polar residues-rich tracts occupy residues 23-32, 167-176, and 388-397; these read PSLSASTSIE, GLGTSLSSEN, and RSSMPSNREP. 2 consecutive C2H2-type zinc fingers follow at residues 500–522 and 561–586; these read QKCK…EKTH and YKCK…EKAH. The segment at 589-663 is disordered; sequence DYVRSKHNGR…PTQTGSGDFP (75 aa). The segment covering 602-632 has biased composition (polar residues); sequence KASNGATPQTPSIATPSSKAQGITTPLTGSE.

The protein resides in the nucleus. Its function is as follows. Transcription factor that contributes to azole resistance by coregulating the expression of the drug target erg11A and the drug efflux pump mdr1. Binds to the 5'-AGGCA-3' motif in the promoters of ergosterol biosynthesis and drug pump genes to regulate their expression. Is able to interact with the promoters of sltA, sltB, erg11A, erg13A, erg24A, mdr1, abcE and mfsC. Involved in antifungal drug resistance to azoles, terbinafine, and simvastatin but not amphotericin B or caspofungin. This chain is C2H2 zinc finger transcription factor sltA, found in Aspergillus fumigatus (strain CBS 144.89 / FGSC A1163 / CEA10) (Neosartorya fumigata).